A 216-amino-acid polypeptide reads, in one-letter code: Probable nicotinate-nucleotide adenylyltransferase (216 aa).

This sequence belongs to the NadD family.

It catalyses the reaction nicotinate beta-D-ribonucleotide + ATP + H(+) = deamido-NAD(+) + diphosphate. It functions in the pathway cofactor biosynthesis; NAD(+) biosynthesis; deamido-NAD(+) from nicotinate D-ribonucleotide: step 1/1. Functionally, catalyzes the reversible adenylation of nicotinate mononucleotide (NaMN) to nicotinic acid adenine dinucleotide (NaAD). This chain is Probable nicotinate-nucleotide adenylyltransferase, found in Geotalea uraniireducens (strain Rf4) (Geobacter uraniireducens).